Consider the following 620-residue polypeptide: Chaperone protein HscA homolog (620 aa).

It belongs to the heat shock protein 70 family.

Chaperone involved in the maturation of iron-sulfur cluster-containing proteins. Has a low intrinsic ATPase activity which is markedly stimulated by HscB. The sequence is that of Chaperone protein HscA homolog from Shewanella baltica (strain OS195).